Here is a 115-residue protein sequence, read N- to C-terminus: NADH-ubiquinone oxidoreductase chain 3 (115 aa).

Transmembrane regions (helical) follow at residues 4 to 24 (MLIL…AFWL), 55 to 75 (FFLV…LLPL), and 86 to 106 (MLMT…AYEW).

It belongs to the complex I subunit 3 family. Core subunit of respiratory chain NADH dehydrogenase (Complex I) which is composed of 45 different subunits. Interacts with TMEM186. Interacts with TMEM242.

The protein localises to the mitochondrion inner membrane. The catalysed reaction is a ubiquinone + NADH + 5 H(+)(in) = a ubiquinol + NAD(+) + 4 H(+)(out). In terms of biological role, core subunit of the mitochondrial membrane respiratory chain NADH dehydrogenase (Complex I) which catalyzes electron transfer from NADH through the respiratory chain, using ubiquinone as an electron acceptor. Essential for the catalytic activity of complex I. The chain is NADH-ubiquinone oxidoreductase chain 3 from Microtus pennsylvanicus (Meadow vole).